The following is a 260-amino-acid chain: Tryptophan synthase alpha chain (260 aa).

Residues E52 and D63 each act as proton acceptor in the active site.

The protein belongs to the TrpA family. As to quaternary structure, tetramer of two alpha and two beta chains.

It catalyses the reaction (1S,2R)-1-C-(indol-3-yl)glycerol 3-phosphate + L-serine = D-glyceraldehyde 3-phosphate + L-tryptophan + H2O. Its pathway is amino-acid biosynthesis; L-tryptophan biosynthesis; L-tryptophan from chorismate: step 5/5. Functionally, the alpha subunit is responsible for the aldol cleavage of indoleglycerol phosphate to indole and glyceraldehyde 3-phosphate. This chain is Tryptophan synthase alpha chain, found in Streptococcus thermophilus (strain ATCC BAA-250 / LMG 18311).